The sequence spans 295 residues: Light-independent protochlorophyllide reductase iron-sulfur ATP-binding protein (295 aa).

ATP-binding positions include 39–44 (GIGKST) and Lys-68. Ser-43 is a Mg(2+) binding site. Cys-124 and Cys-158 together coordinate [4Fe-4S] cluster. ATP is bound at residue 209–210 (NR).

This sequence belongs to the NifH/BchL/ChlL family. In terms of assembly, homodimer. Protochlorophyllide reductase is composed of three subunits; ChlL, ChlN and ChlB. [4Fe-4S] cluster is required as a cofactor.

It carries out the reaction chlorophyllide a + oxidized 2[4Fe-4S]-[ferredoxin] + 2 ADP + 2 phosphate = protochlorophyllide a + reduced 2[4Fe-4S]-[ferredoxin] + 2 ATP + 2 H2O. It functions in the pathway porphyrin-containing compound metabolism; chlorophyll biosynthesis (light-independent). Its function is as follows. Component of the dark-operative protochlorophyllide reductase (DPOR) that uses Mg-ATP and reduced ferredoxin to reduce ring D of protochlorophyllide (Pchlide) to form chlorophyllide a (Chlide). This reaction is light-independent. The L component serves as a unique electron donor to the NB-component of the complex, and binds Mg-ATP. The polypeptide is Light-independent protochlorophyllide reductase iron-sulfur ATP-binding protein (Prochlorococcus marinus (strain MIT 9312)).